A 350-amino-acid polypeptide reads, in one-letter code: Enoyl-[acyl-carrier-protein] reductase, mitochondrial (350 aa).

Residues 1–12 constitute a mitochondrion transit peptide; that stretch reads MWLGLRLFHRPF. The active-site Proton donor is the Y68. NADP(+) contacts are provided by residues N141, 167–170, 190–192, 259–262, 284–286, and K345; these read NSGV, RDR, YGGM, and FWV.

Belongs to the zinc-containing alcohol dehydrogenase family. Quinone oxidoreductase subfamily. Homodimer. As to expression, expressed in the developing pronephros.

Its subcellular location is the mitochondrion. It carries out the reaction a 2,3-saturated acyl-[ACP] + NADP(+) = a (2E)-enoyl-[ACP] + NADPH + H(+). Functionally, catalyzes the NADPH-dependent reduction of trans-2-enoyl thioesters in mitochondrial fatty acid synthesis (fatty acid synthesis type II). Fatty acid chain elongation in mitochondria uses acyl carrier protein (ACP) as an acyl group carrier, but the enzyme accepts both ACP and CoA thioesters as substrates in vitro. May provide the octanoyl chain used for lipoic acid biosynthesis, regulating protein lipoylation and mitochondrial respiratory activity. Involved in iron homeostasis; affecting Fe-S cluster assembly and ceramide metabolism. Required for proper morphology and bioenergetic functions of mitochondria. Required for maintenance of neurons. Functions in pronephros development, regulating late differentiation of all pronephric tubule segments. This Xenopus tropicalis (Western clawed frog) protein is Enoyl-[acyl-carrier-protein] reductase, mitochondrial (mecr).